The following is a 561-amino-acid chain: Glucose-6-phosphate isomerase (561 aa).

Glu-366 (proton donor) is an active-site residue. Residues His-397 and Lys-525 contribute to the active site.

It belongs to the GPI family.

The protein resides in the cytoplasm. The catalysed reaction is alpha-D-glucose 6-phosphate = beta-D-fructose 6-phosphate. The protein operates within carbohydrate degradation; glycolysis; D-glyceraldehyde 3-phosphate and glycerone phosphate from D-glucose: step 2/4. The sequence is that of Glucose-6-phosphate isomerase (gpi) from Dictyostelium discoideum (Social amoeba).